Here is a 545-residue protein sequence, read N- to C-terminus: Glucose-6-phosphate isomerase (545 aa).

E351 functions as the Proton donor in the catalytic mechanism. Active-site residues include H382 and K510.

This sequence belongs to the GPI family.

The protein resides in the cytoplasm. It carries out the reaction alpha-D-glucose 6-phosphate = beta-D-fructose 6-phosphate. It functions in the pathway carbohydrate biosynthesis; gluconeogenesis. It participates in carbohydrate degradation; glycolysis; D-glyceraldehyde 3-phosphate and glycerone phosphate from D-glucose: step 2/4. Functionally, catalyzes the reversible isomerization of glucose-6-phosphate to fructose-6-phosphate. This is Glucose-6-phosphate isomerase from Helicobacter pylori (strain J99 / ATCC 700824) (Campylobacter pylori J99).